A 280-amino-acid chain; its full sequence is Tumor necrosis factor ligand superfamily member 6 (280 aa).

Residues 1 to 80 (MQQPLNYPYP…KTRRDHNTGL (80 aa)) lie on the Cytoplasmic side of the membrane. A disordered region spans residues 20–71 (SSPWGPPGSVLPCPSSVPGRPGQRRPPPPPPPTLPPPPPPPPLPPLPLPPLK). Positions 43–69 (RRPPPPPPPTLPPPPPPPPLPPLPLPP) are enriched in pro residues. The chain crosses the membrane as a helical; Signal-anchor for type II membrane protein span at residues 81-101 (CLLVMFFMVLVALVGLGLGMF). Residues 102 to 280 (QLFHLQKELA…SKTFFGLYKL (179 aa)) are Extracellular-facing. Residues 144 to 280 (KVAHLTGKPN…SKTFFGLYKL (137 aa)) enclose the THD domain. N-linked (GlcNAc...) asparagine glycosylation is present at Asn183. An intrachain disulfide couples Cys201 to Cys232. N-linked (GlcNAc...) asparagine glycosylation is found at Asn249 and Asn259.

It belongs to the tumor necrosis factor family. In terms of assembly, homotrimer. Interacts with ARHGAP9, BAIAP2L1, BTK, CACNB3, CACNB4, CRK, DLG2, DNMBP, DOCK4, EPS8L3, FGR, FYB1, FYN, HCK, ITK, ITSN2, KALRN, LYN, MACC1, MIA, MPP4, MYO15A, NCF1, NCK1, NCK2, NCKIPSD, OSTF1, PIK3R1, PSTPIP1, RIMBP3C, SAMSN1, SH3GL3, SH3PXD2B, SH3PXD2A, SH3RF2, SKAP2, SNX33, SNX9, SORBS3, SPTA1, SRC, SRGAP1, SRGAP2, SRGAP3, TEC, TJP3 and YES1. The soluble form derives from the membrane form by proteolytic processing. The membrane-bound form undergoes two successive intramembrane proteolytic cleavages. The first one is processed by ADAM10 producing an N-terminal fragment, which lacks the receptor-binding extracellular domain. This ADAM10-processed FasL (FasL APL) remnant form is still membrane anchored and further processed by SPPL2A that liberates the FasL intracellular domain (FasL ICD). FasL shedding by ADAM10 is a prerequisite for subsequent intramembrane cleavage by SPPL2A in T-cells. In terms of processing, phosphorylated by FGR on tyrosine residues; this is required for ubiquitination and subsequent internalization. Post-translationally, N-glycosylated. Glycosylation enhances apoptotic activity. Monoubiquitinated.

It is found in the cell membrane. Its subcellular location is the cytoplasmic vesicle lumen. It localises to the lysosome lumen. The protein resides in the secreted. The protein localises to the nucleus. In terms of biological role, cytokine that binds to TNFRSF6/FAS, a receptor that transduces the apoptotic signal into cells. Involved in cytotoxic T-cell-mediated apoptosis, natural killer cell-mediated apoptosis and in T-cell development. Initiates fratricidal/suicidal activation-induced cell death (AICD) in antigen-activated T-cells contributing to the termination of immune responses. TNFRSF6/FAS-mediated apoptosis has also a role in the induction of peripheral tolerance. Binds to TNFRSF6B/DcR3, a decoy receptor that blocks apoptosis. Induces FAS-mediated activation of NF-kappa-B, initiating non-apoptotic signaling pathways. Can induce apoptosis but does not appear to be essential for this process. Functionally, cytoplasmic form induces gene transcription inhibition. This is Tumor necrosis factor ligand superfamily member 6 (FASLG) from Felis catus (Cat).